We begin with the raw amino-acid sequence, 401 residues long: Ribosomal RNA dihydrouridine synthase (401 aa).

9 residues coordinate FAD: A15, D34, N35, R41, G47, N52, V132, E371, and F384.

Belongs to the BaiN/RdsA family. RdsA subfamily. FAD serves as cofactor.

It carries out the reaction a 5,6-dihydrouridine in mRNA + NAD(+) = a uridine in mRNA + NADH + H(+). Functionally, catalyzes the synthesis of 5,6-dihydrouridine (D) at position 2449 in 23S rRNA. The polypeptide is Ribosomal RNA dihydrouridine synthase (Haemophilus influenzae (strain ATCC 51907 / DSM 11121 / KW20 / Rd)).